Reading from the N-terminus, the 216-residue chain is Ribonuclease HII (216 aa).

The RNase H type-2 domain maps to 33–216 (WPVAGADEAG…RMSFRPFRQL (184 aa)). A divalent metal cation is bound by residues D39, E40, and D130.

Belongs to the RNase HII family. Mn(2+) serves as cofactor. Requires Mg(2+) as cofactor.

The protein resides in the cytoplasm. It catalyses the reaction Endonucleolytic cleavage to 5'-phosphomonoester.. Its function is as follows. Endonuclease that specifically degrades the RNA of RNA-DNA hybrids. This Sinorhizobium medicae (strain WSM419) (Ensifer medicae) protein is Ribonuclease HII.